We begin with the raw amino-acid sequence, 843 residues long: Protein P (843 aa).

Residues Met1–Gln177 form a terminal protein domain (TP) region. Residues Glu178–Leu346 form a spacer region. The segment at His248–Ser272 is disordered. Positions Glu347 to Gln690 are polymerase/reverse transcriptase domain (RT). A Reverse transcriptase domain is found at Glu357 to Ile600. Asp429, Asp551, and Asp552 together coordinate Mg(2+).

Belongs to the hepadnaviridae P protein family.

The enzyme catalyses DNA(n) + a 2'-deoxyribonucleoside 5'-triphosphate = DNA(n+1) + diphosphate. The catalysed reaction is Endonucleolytic cleavage to 5'-phosphomonoester.. With respect to regulation, activated by host HSP70 and HSP40 in vitro to be able to bind the epsilon loop of the pgRNA. Because deletion of the RNase H region renders the protein partly chaperone-independent, the chaperones may be needed indirectly to relieve occlusion of the RNA-binding site by this domain. Inhibited by several reverse-transcriptase inhibitors: Lamivudine, Adefovir and Entecavir. Its function is as follows. Multifunctional enzyme that converts the viral RNA genome into dsDNA in viral cytoplasmic capsids. This enzyme displays a DNA polymerase activity that can copy either DNA or RNA templates, and a ribonuclease H (RNase H) activity that cleaves the RNA strand of RNA-DNA heteroduplexes in a partially processive 3'- to 5'-endonucleasic mode. Neo-synthesized pregenomic RNA (pgRNA) are encapsidated together with the P protein, and reverse-transcribed inside the nucleocapsid. Initiation of reverse-transcription occurs first by binding the epsilon loop on the pgRNA genome, and is initiated by protein priming, thereby the 5'-end of (-)DNA is covalently linked to P protein. Partial (+)DNA is synthesized from the (-)DNA template and generates the relaxed circular DNA (RC-DNA) genome. After budding and infection, the RC-DNA migrates in the nucleus, and is converted into a plasmid-like covalently closed circular DNA (cccDNA). The activity of P protein does not seem to be necessary for cccDNA generation, and is presumably released from (+)DNA by host nuclear DNA repair machinery. The polypeptide is Protein P (Homo sapiens (Human)).